The following is a 225-amino-acid chain: Biosynthetic peptidoglycan transglycosylase (225 aa).

The helical transmembrane segment at 12-32 (IWFVAWRFLLLFVIVLFLFRF) threads the bilayer.

This sequence belongs to the glycosyltransferase 51 family.

The protein localises to the cell inner membrane. It catalyses the reaction [GlcNAc-(1-&gt;4)-Mur2Ac(oyl-L-Ala-gamma-D-Glu-L-Lys-D-Ala-D-Ala)](n)-di-trans,octa-cis-undecaprenyl diphosphate + beta-D-GlcNAc-(1-&gt;4)-Mur2Ac(oyl-L-Ala-gamma-D-Glu-L-Lys-D-Ala-D-Ala)-di-trans,octa-cis-undecaprenyl diphosphate = [GlcNAc-(1-&gt;4)-Mur2Ac(oyl-L-Ala-gamma-D-Glu-L-Lys-D-Ala-D-Ala)](n+1)-di-trans,octa-cis-undecaprenyl diphosphate + di-trans,octa-cis-undecaprenyl diphosphate + H(+). It functions in the pathway cell wall biogenesis; peptidoglycan biosynthesis. Its function is as follows. Peptidoglycan polymerase that catalyzes glycan chain elongation from lipid-linked precursors. This Marinomonas sp. (strain MWYL1) protein is Biosynthetic peptidoglycan transglycosylase.